Here is a 233-residue protein sequence, read N- to C-terminus: MNTNADPAEVQKFSDLAHRWWDPASEFKPLHEINPLRLDWIDGHCGLAGKKVLDVGCGGGLLSEGMAQRGAEVSGIDLSEKALGVARLHLYESGLQVDYQLTSAEAHAATHPAQFDVVTCMEMLEHVPNPESTVHACAQMAKPGGAVFFSTLNRNFKAYLFAVVGAEYLLNLLPRGTHDYAKFIKPSELSRYCRNAGLELVSLSGMTYNPITKVYALSRDTDVNYMVHARKLG.

Positions 37, 56, 77, and 121 each coordinate S-adenosyl-L-methionine.

The protein belongs to the methyltransferase superfamily. UbiG/COQ3 family.

The enzyme catalyses a 3-demethylubiquinol + S-adenosyl-L-methionine = a ubiquinol + S-adenosyl-L-homocysteine + H(+). It catalyses the reaction a 3-(all-trans-polyprenyl)benzene-1,2-diol + S-adenosyl-L-methionine = a 2-methoxy-6-(all-trans-polyprenyl)phenol + S-adenosyl-L-homocysteine + H(+). The protein operates within cofactor biosynthesis; ubiquinone biosynthesis. Its function is as follows. O-methyltransferase that catalyzes the 2 O-methylation steps in the ubiquinone biosynthetic pathway. In Azoarcus sp. (strain BH72), this protein is Ubiquinone biosynthesis O-methyltransferase.